Reading from the N-terminus, the 208-residue chain is Uracil phosphoribosyltransferase (208 aa).

Residues R78, R103, and 130–138 (DPMLATGGS) contribute to the 5-phospho-alpha-D-ribose 1-diphosphate site. Uracil is bound by residues I193 and 198 to 200 (GDA). D199 serves as a coordination point for 5-phospho-alpha-D-ribose 1-diphosphate.

Belongs to the UPRTase family. The cofactor is Mg(2+).

It catalyses the reaction UMP + diphosphate = 5-phospho-alpha-D-ribose 1-diphosphate + uracil. The protein operates within pyrimidine metabolism; UMP biosynthesis via salvage pathway; UMP from uracil: step 1/1. Allosterically activated by GTP. Catalyzes the conversion of uracil and 5-phospho-alpha-D-ribose 1-diphosphate (PRPP) to UMP and diphosphate. The protein is Uracil phosphoribosyltransferase of Yersinia enterocolitica serotype O:8 / biotype 1B (strain NCTC 13174 / 8081).